The primary structure comprises 841 residues: MAP7 domain-containing protein 1 (841 aa).

Disordered regions lie at residues 1–151 (MESG…ERAK) and 184–208 (EQRL…EKNK). A compositionally biased stretch (pro residues) spans 22–52 (PPEPRPSPEGDPSPPPPPMSALVPDTPPDTP). A phosphothreonine mark is found at Thr-47 and Thr-51. Ser-70, Ser-86, and Ser-93 each carry phosphoserine. Residue Thr-97 is modified to Phosphothreonine. Residues Ser-113 and Ser-116 each carry the phosphoserine modification. Position 118 is a phosphothreonine (Thr-118). A phosphoserine mark is found at Ser-123 and Ser-125. Positions 128 to 222 (TKQEVKKAGE…AAIQRSVKKT (95 aa)) form a coiled coil. Positions 130–151 (QEVKKAGERHKLAKERREERAK) are enriched in basic and acidic residues. Ser-254, Ser-273, Ser-313, Ser-366, and Ser-399 each carry phosphoserine. The disordered stretch occupies residues 316–813 (TLPRNGRDQG…PSGDKSLSRT (498 aa)). Residues 365-377 (ASASPLTPCSVTR) show a composition bias toward polar residues. Basic and acidic residues predominate over residues 405–435 (RRPEASPVQKKEKKDKERENEKEKSALARER). Positions 412–441 (VQKKEKKDKERENEKEKSALARERSLKKRQ) form a coiled coil. Ser-442, Ser-446, Ser-452, Ser-454, and Ser-460 each carry phosphoserine. Residues 460-473 (SPKSKARPSSPSTS) show a composition bias toward low complexity. Lys-462 participates in a covalent cross-link: Glycyl lysine isopeptide (Lys-Gly) (interchain with G-Cter in SUMO2). Ser-479 and Ser-496 each carry phosphoserine. The segment covering 479–497 (SPCPSPGPGHTLPPKPPSP) has biased composition (pro residues). Residues 523–539 (PEDKSQSKRRASNEKES) are compositionally biased toward basic and acidic residues. Phosphoserine is present on residues Ser-544, Ser-548, and Ser-552. Over residues 544-561 (SPAPSPAPSPTPAPPQKE) the composition is skewed to pro residues. Phosphothreonine is present on Thr-554. Low complexity predominate over residues 562 to 576 (QPPAETPTDAAVLTS). The span at 577–586 (PPAPAPPVTP) shows a compositional bias: pro residues. Positions 593–721 (TTDREEATRL…LEEIMKRTRK (129 aa)) form a coiled coil. The span at 594–735 (TDREEATRLL…ETKQKQDSKE (142 aa)) shows a compositional bias: basic and acidic residues. Phosphoserine occurs at positions 742 and 753. 2 positions are modified to phosphothreonine: Thr-813 and Thr-816. Phosphoserine is present on Ser-834.

This sequence belongs to the MAP7 family.

It is found in the cytoplasm. It localises to the cytoskeleton. Its subcellular location is the spindle. The protein resides in the microtubule organizing center. The protein localises to the centrosome. It is found in the midbody. Functionally, microtubule-stabilizing protein involved in the control of cell motility and neurite outgrowth. Facilitate microtubule stabilization through the maintenance of acetylated stable microtubules. The sequence is that of MAP7 domain-containing protein 1 (MAP7D1) from Homo sapiens (Human).